Here is a 341-residue protein sequence, read N- to C-terminus: Phosphoribosylformylglycinamidine cyclo-ligase (341 aa).

The protein belongs to the AIR synthase family.

The protein localises to the cytoplasm. It carries out the reaction 2-formamido-N(1)-(5-O-phospho-beta-D-ribosyl)acetamidine + ATP = 5-amino-1-(5-phospho-beta-D-ribosyl)imidazole + ADP + phosphate + H(+). It participates in purine metabolism; IMP biosynthesis via de novo pathway; 5-amino-1-(5-phospho-D-ribosyl)imidazole from N(2)-formyl-N(1)-(5-phospho-D-ribosyl)glycinamide: step 2/2. The protein is Phosphoribosylformylglycinamidine cyclo-ligase of Xanthomonas axonopodis pv. citri (strain 306).